Consider the following 832-residue polypeptide: Beta-galactosidase (832 aa).

The N-terminal stretch at 1-25 is a signal peptide; it reads MALKLVLMLMVALLAAVWSPPAVTA. Glutamate 183 functions as the Proton donor in the catalytic mechanism. The Nucleophile role is filled by glutamate 252. The region spanning 741–832 is the SUEL-type lectin domain; that stretch reads AYGRPKVHLS…KKLAVEAICE (92 aa).

It belongs to the glycosyl hydrolase 35 family.

Its subcellular location is the secreted. It localises to the extracellular space. The protein resides in the apoplast. It catalyses the reaction Hydrolysis of terminal non-reducing beta-D-galactose residues in beta-D-galactosides.. The polypeptide is Beta-galactosidase (Asparagus officinalis (Garden asparagus)).